A 111-amino-acid polypeptide reads, in one-letter code: UPF0060 membrane protein HCH_03337 (111 aa).

Helical transmembrane passes span 8–28, 33–53, 65–85, and 88–108; these read LLFA…WLVI, SLWL…LLTL, YGGM…GVGL, and FDFL…LQPI.

Belongs to the UPF0060 family.

The protein localises to the cell inner membrane. The chain is UPF0060 membrane protein HCH_03337 from Hahella chejuensis (strain KCTC 2396).